The sequence spans 314 residues: Porphobilinogen deaminase (314 aa).

S-(dipyrrolylmethanemethyl)cysteine is present on Cys249.

Belongs to the HMBS family. Monomer. The cofactor is dipyrromethane.

It catalyses the reaction 4 porphobilinogen + H2O = hydroxymethylbilane + 4 NH4(+). Its pathway is porphyrin-containing compound metabolism; protoporphyrin-IX biosynthesis; coproporphyrinogen-III from 5-aminolevulinate: step 2/4. Its function is as follows. Tetrapolymerization of the monopyrrole PBG into the hydroxymethylbilane pre-uroporphyrinogen in several discrete steps. This is Porphobilinogen deaminase from Brucella anthropi (strain ATCC 49188 / DSM 6882 / CCUG 24695 / JCM 21032 / LMG 3331 / NBRC 15819 / NCTC 12168 / Alc 37) (Ochrobactrum anthropi).